Here is a 164-residue protein sequence, read N- to C-terminus: Glutamate uptake regulatory protein (164 aa).

The 62-residue stretch at 5-66 folds into the HTH asnC-type domain; the sequence is LDDFDIKILD…LLDPQKIGLG (62 aa). The segment at residues 24–43 is a DNA-binding region (H-T-H motif); that stretch reads MAELSEKTGLSANACWRRIR.

Functionally, represses the secondary, H(+)-coupled glutamate uptake system (Gluemp) genes. The protein is Glutamate uptake regulatory protein (grp) of Zymomonas mobilis subsp. mobilis (strain ATCC 10988 / DSM 424 / LMG 404 / NCIMB 8938 / NRRL B-806 / ZM1).